The chain runs to 476 residues: ATP synthase subunit beta, chloroplastic (476 aa).

153–160 (GGAGVGKT) contacts ATP.

This sequence belongs to the ATPase alpha/beta chains family. In terms of assembly, F-type ATPases have 2 components, CF(1) - the catalytic core - and CF(0) - the membrane proton channel. CF(1) has five subunits: alpha(3), beta(3), gamma(1), delta(1), epsilon(1). CF(0) has four main subunits: a(1), b(1), b'(1) and c(9-12).

The protein resides in the plastid. It is found in the chloroplast thylakoid membrane. It catalyses the reaction ATP + H2O + 4 H(+)(in) = ADP + phosphate + 5 H(+)(out). Functionally, produces ATP from ADP in the presence of a proton gradient across the membrane. The catalytic sites are hosted primarily by the beta subunits. The sequence is that of ATP synthase subunit beta, chloroplastic from Dicksonia antarctica (Australian tree fern).